The primary structure comprises 181 residues: Crossover junction endodeoxyribonuclease RuvC (181 aa).

Catalysis depends on residues aspartate 7, glutamate 67, and aspartate 139. Residues aspartate 7, glutamate 67, and aspartate 139 each contribute to the Mg(2+) site.

This sequence belongs to the RuvC family. In terms of assembly, homodimer which binds Holliday junction (HJ) DNA. The HJ becomes 2-fold symmetrical on binding to RuvC with unstacked arms; it has a different conformation from HJ DNA in complex with RuvA. In the full resolvosome a probable DNA-RuvA(4)-RuvB(12)-RuvC(2) complex forms which resolves the HJ. It depends on Mg(2+) as a cofactor.

The protein localises to the cytoplasm. The catalysed reaction is Endonucleolytic cleavage at a junction such as a reciprocal single-stranded crossover between two homologous DNA duplexes (Holliday junction).. Its function is as follows. The RuvA-RuvB-RuvC complex processes Holliday junction (HJ) DNA during genetic recombination and DNA repair. Endonuclease that resolves HJ intermediates. Cleaves cruciform DNA by making single-stranded nicks across the HJ at symmetrical positions within the homologous arms, yielding a 5'-phosphate and a 3'-hydroxyl group; requires a central core of homology in the junction. The consensus cleavage sequence is 5'-(A/T)TT(C/G)-3'. Cleavage occurs on the 3'-side of the TT dinucleotide at the point of strand exchange. HJ branch migration catalyzed by RuvA-RuvB allows RuvC to scan DNA until it finds its consensus sequence, where it cleaves and resolves the cruciform DNA. The chain is Crossover junction endodeoxyribonuclease RuvC from Cupriavidus metallidurans (strain ATCC 43123 / DSM 2839 / NBRC 102507 / CH34) (Ralstonia metallidurans).